We begin with the raw amino-acid sequence, 512 residues long: MELYYFSTFAFLLFCFILAKTLKKSGQSNLKLPLGPPPIPILGNAHQLIGGHTHHILRDLAKKYGPLMHLKTGEVSTIVASSPEIAEEMFKTHDVLFADRPSNIVAFKILSYDYSDVVISPYGNYWRQLRKISMMELFSQRSVQSFRSIREEEVLNFIKSIGSREGTKINLSKEISLLIYGITTRAAFGEKNKNTEEFIRLLDQLTVAVAEPNIADMFPSINFLKLISRSKYKIEKIHKNFDAIVQTILNHHKDRLANHKSSSHEENGEQNKDLVDVLLNIQQRGDFDTPLGDRSVKAVIFNIFSAGTETSSTTVDWAMCEMIKNPTIMKKAQEEVRKVYNEEGNVNETKLHQLKYLKAVIKETLRLHPPVPLLLPRECREQCEIKGYTIPSKSRVIVNAWAIGRDPNYWIEPENFNPERFLESEVDFKGNSFEYLPFGGGRRICPGITFALANIELPLAQLLFHFDWKLASDETNIDKLDMTESRGVTVRREDDLCLIPFPYSASSLKGKY.

A topological domain (lumenal) is located at residue Met-1. A helical membrane pass occupies residues 2 to 22 (ELYYFSTFAFLLFCFILAKTL). The Cytoplasmic portion of the chain corresponds to 23-512 (KKSGQSNLKL…YSASSLKGKY (490 aa)). Cys-445 lines the heme pocket.

It belongs to the cytochrome P450 family. Heme is required as a cofactor. Expressed at low levels in roots, fruits, stems, flower buds and flowers, but highly expressed in young leaves. Detected in adaxial and abaxial epidermis cells.

It localises to the endoplasmic reticulum membrane. It catalyses the reaction (-)-tabersonine + reduced [NADPH--hemoprotein reductase] + O2 = 16-hydroxytabersonine + oxidized [NADPH--hemoprotein reductase] + H2O + H(+). Its function is as follows. Involved in the foliar biosynthesis of vindoline, a precursor of vinblastine and vincristine. Hydroxylates specifically tabersonine, 2,3-dihydrotabersonine and 2,3-dihydro-3-hydroxytabersonine, but has no activity with naringenin, tryptamine, secologanin, strictosidine, ajmalicine, vindoline and catharanthine. The chain is Tabersonine 16-hydroxylase 2 from Catharanthus roseus (Madagascar periwinkle).